Here is a 415-residue protein sequence, read N- to C-terminus: Trehalose synthase (415 aa).

It belongs to the glycosyltransferase group 1 family. Glycosyltransferase 4 subfamily. Homodimer. Mg(2+) is required as a cofactor.

It catalyses the reaction an NDP-alpha-D-glucose + D-glucose = alpha,alpha-trehalose + a ribonucleoside 5'-diphosphate + H(+). Synthesizes trehalose from ADP-, UDP- or GDP-glucose and glucose. This is Trehalose synthase from Pyrococcus horikoshii (strain ATCC 700860 / DSM 12428 / JCM 9974 / NBRC 100139 / OT-3).